We begin with the raw amino-acid sequence, 235 residues long: Large ribosomal subunit protein uL1 (235 aa).

The protein belongs to the universal ribosomal protein uL1 family. Part of the 50S ribosomal subunit.

Functionally, binds directly to 23S rRNA. The L1 stalk is quite mobile in the ribosome, and is involved in E site tRNA release. In terms of biological role, protein L1 is also a translational repressor protein, it controls the translation of the L11 operon by binding to its mRNA. In Mycolicibacterium smegmatis (strain ATCC 700084 / mc(2)155) (Mycobacterium smegmatis), this protein is Large ribosomal subunit protein uL1.